The sequence spans 351 residues: UDP-3-O-acylglucosamine N-acyltransferase (351 aa).

Catalysis depends on His-240, which acts as the Proton acceptor.

This sequence belongs to the transferase hexapeptide repeat family. LpxD subfamily. In terms of assembly, homotrimer.

It carries out the reaction a UDP-3-O-[(3R)-3-hydroxyacyl]-alpha-D-glucosamine + a (3R)-hydroxyacyl-[ACP] = a UDP-2-N,3-O-bis[(3R)-3-hydroxyacyl]-alpha-D-glucosamine + holo-[ACP] + H(+). It functions in the pathway bacterial outer membrane biogenesis; LPS lipid A biosynthesis. Its function is as follows. Catalyzes the N-acylation of UDP-3-O-acylglucosamine using 3-hydroxyacyl-ACP as the acyl donor. Is involved in the biosynthesis of lipid A, a phosphorylated glycolipid that anchors the lipopolysaccharide to the outer membrane of the cell. This chain is UDP-3-O-acylglucosamine N-acyltransferase, found in Pseudomonas syringae pv. tomato (strain ATCC BAA-871 / DC3000).